The sequence spans 463 residues: Siroheme synthase (463 aa).

A precorrin-2 dehydrogenase /sirohydrochlorin ferrochelatase region spans residues 1–203 (MDYLPLFHKL…GQGAEAERLL (203 aa)). NAD(+)-binding positions include 22-23 (EI) and 43-44 (PE). Ser-128 is modified (phosphoserine). Residues 216 to 463 (GEVYLVGAGP…LAWFEGAQNS (248 aa)) form a uroporphyrinogen-III C-methyltransferase region. Pro-225 lines the S-adenosyl-L-methionine pocket. Asp-248 acts as the Proton acceptor in catalysis. Catalysis depends on Lys-270, which acts as the Proton donor. S-adenosyl-L-methionine is bound by residues 301–303 (GGD), Ile-306, 331–332 (TA), Met-383, and Gly-412.

This sequence in the N-terminal section; belongs to the precorrin-2 dehydrogenase / sirohydrochlorin ferrochelatase family. The protein in the C-terminal section; belongs to the precorrin methyltransferase family.

The catalysed reaction is uroporphyrinogen III + 2 S-adenosyl-L-methionine = precorrin-2 + 2 S-adenosyl-L-homocysteine + H(+). It catalyses the reaction precorrin-2 + NAD(+) = sirohydrochlorin + NADH + 2 H(+). The enzyme catalyses siroheme + 2 H(+) = sirohydrochlorin + Fe(2+). Its pathway is cofactor biosynthesis; adenosylcobalamin biosynthesis; precorrin-2 from uroporphyrinogen III: step 1/1. It functions in the pathway cofactor biosynthesis; adenosylcobalamin biosynthesis; sirohydrochlorin from precorrin-2: step 1/1. It participates in porphyrin-containing compound metabolism; siroheme biosynthesis; precorrin-2 from uroporphyrinogen III: step 1/1. The protein operates within porphyrin-containing compound metabolism; siroheme biosynthesis; siroheme from sirohydrochlorin: step 1/1. Its pathway is porphyrin-containing compound metabolism; siroheme biosynthesis; sirohydrochlorin from precorrin-2: step 1/1. Its function is as follows. Multifunctional enzyme that catalyzes the SAM-dependent methylations of uroporphyrinogen III at position C-2 and C-7 to form precorrin-2 via precorrin-1. Then it catalyzes the NAD-dependent ring dehydrogenation of precorrin-2 to yield sirohydrochlorin. Finally, it catalyzes the ferrochelation of sirohydrochlorin to yield siroheme. In Pseudomonas entomophila (strain L48), this protein is Siroheme synthase.